A 218-amino-acid polypeptide reads, in one-letter code: Probable nicotinate-nucleotide adenylyltransferase (218 aa).

It belongs to the NadD family.

The catalysed reaction is nicotinate beta-D-ribonucleotide + ATP + H(+) = deamido-NAD(+) + diphosphate. It functions in the pathway cofactor biosynthesis; NAD(+) biosynthesis; deamido-NAD(+) from nicotinate D-ribonucleotide: step 1/1. Functionally, catalyzes the reversible adenylation of nicotinate mononucleotide (NaMN) to nicotinic acid adenine dinucleotide (NaAD). The polypeptide is Probable nicotinate-nucleotide adenylyltransferase (Acidithiobacillus ferrooxidans (strain ATCC 23270 / DSM 14882 / CIP 104768 / NCIMB 8455) (Ferrobacillus ferrooxidans (strain ATCC 23270))).